We begin with the raw amino-acid sequence, 405 residues long: Putative colanic acid biosynthesis glycosyl transferase WcaC (405 aa).

Its pathway is slime biogenesis; slime polysaccharide biosynthesis. This is Putative colanic acid biosynthesis glycosyl transferase WcaC (wcaC) from Escherichia coli (strain K12).